The primary structure comprises 61 residues: DNTAKEKDSPANLSLRTCAAGDNAEQPLDPSRNTFDNAYYIALQRQAGVLFSDQSLFTSAR.

The tract at residues 1–32 is disordered; it reads DNTAKEKDSPANLSLRTCAAGDNAEQPLDPSR. Asn-12 is a glycosylation site (N-linked (GlcNAc...) asparagine). Ca(2+) is bound by residues Asp-29, Ser-31, and Asp-36.

This sequence belongs to the peroxidase family. Classical plant (class III) peroxidase subfamily. Ca(2+) serves as cofactor. It depends on heme b as a cofactor.

It localises to the secreted. The catalysed reaction is 2 a phenolic donor + H2O2 = 2 a phenolic radical donor + 2 H2O. Removal of H(2)O(2), oxidation of toxic reductants, biosynthesis and degradation of lignin, suberization, auxin catabolism, response to environmental stresses such as wounding, pathogen attack and oxidative stress. These functions might be dependent on each isozyme/isoform in each plant tissue. The chain is Peroxidase 1 from Vitis rotundifolia (Muscadine grape).